Reading from the N-terminus, the 241-residue chain is Ribonuclease PH (241 aa).

Phosphate contacts are provided by residues arginine 90 and 128–130 (GTR).

This sequence belongs to the RNase PH family. Homohexameric ring arranged as a trimer of dimers.

The enzyme catalyses tRNA(n+1) + phosphate = tRNA(n) + a ribonucleoside 5'-diphosphate. Functionally, phosphorolytic 3'-5' exoribonuclease that plays an important role in tRNA 3'-end maturation. Removes nucleotide residues following the 3'-CCA terminus of tRNAs; can also add nucleotides to the ends of RNA molecules by using nucleoside diphosphates as substrates, but this may not be physiologically important. Probably plays a role in initiation of 16S rRNA degradation (leading to ribosome degradation) during starvation. This Corynebacterium diphtheriae (strain ATCC 700971 / NCTC 13129 / Biotype gravis) protein is Ribonuclease PH.